A 618-amino-acid polypeptide reads, in one-letter code: Proline--tRNA ligase (618 aa).

It belongs to the class-II aminoacyl-tRNA synthetase family. ProS type 1 subfamily. As to quaternary structure, homodimer.

Its subcellular location is the cytoplasm. It catalyses the reaction tRNA(Pro) + L-proline + ATP = L-prolyl-tRNA(Pro) + AMP + diphosphate. Its function is as follows. Catalyzes the attachment of proline to tRNA(Pro) in a two-step reaction: proline is first activated by ATP to form Pro-AMP and then transferred to the acceptor end of tRNA(Pro). As ProRS can inadvertently accommodate and process non-cognate amino acids such as alanine and cysteine, to avoid such errors it has two additional distinct editing activities against alanine. One activity is designated as 'pretransfer' editing and involves the tRNA(Pro)-independent hydrolysis of activated Ala-AMP. The other activity is designated 'posttransfer' editing and involves deacylation of mischarged Ala-tRNA(Pro). The misacylated Cys-tRNA(Pro) is not edited by ProRS. In Streptococcus pyogenes serotype M4 (strain MGAS10750), this protein is Proline--tRNA ligase.